Here is a 281-residue protein sequence, read N- to C-terminus: Nucleotide-binding protein TRQ2_1124 (281 aa).

9 to 16 (GLSGAGKT) is an ATP binding site. Position 58 to 61 (58 to 61 (DVRS)) interacts with GTP.

It belongs to the RapZ-like family.

Displays ATPase and GTPase activities. In Thermotoga sp. (strain RQ2), this protein is Nucleotide-binding protein TRQ2_1124.